A 595-amino-acid polypeptide reads, in one-letter code: GPI mannosyltransferase 3 (595 aa).

10 consecutive transmembrane segments (helical) span residues 58 to 78 (YAFPMLFEMSYYVAWILGVAT), 85 to 105 (LAHATALCGAVVPSGAAGVAA), 128 to 148 (GPRVVMAAVAACGEFYSVLLV), 185 to 207 (FFATRTFINSFEMTLTAVALYHW), 212 to 232 (GLDVGSLGFSASLAVAAFACL), 235 to 255 (PTNVLIWAVLGLFLVLNLVRS), 260 to 280 (LLLTLVAKVAAAGALAVCANI), 289 to 309 (GVLLPLLRFIEFNVTTPLAAF), 319 to 339 (LLQSVPLIVGYALPFFVGALL), and 413 to 433 (VQSLLYVLPVLSITAALVLNT).

It belongs to the glycosyltransferase 22 family. PIGB subfamily.

It is found in the endoplasmic reticulum membrane. It functions in the pathway glycolipid biosynthesis; glycosylphosphatidylinositol-anchor biosynthesis. Functionally, mannosyltransferase involved in glycosylphosphatidylinositol-anchor biosynthesis. Transfers the third mannose to Man2-GlcN-acyl-PI during GPI precursor assembly. This is GPI mannosyltransferase 3 (GPI10) from Eremothecium gossypii (strain ATCC 10895 / CBS 109.51 / FGSC 9923 / NRRL Y-1056) (Yeast).